A 171-amino-acid chain; its full sequence is Crossover junction endodeoxyribonuclease RuvC (171 aa).

Catalysis depends on residues D11, E71, and D143. Mg(2+) contacts are provided by D11, E71, and D143.

It belongs to the RuvC family. In terms of assembly, homodimer which binds Holliday junction (HJ) DNA. The HJ becomes 2-fold symmetrical on binding to RuvC with unstacked arms; it has a different conformation from HJ DNA in complex with RuvA. In the full resolvosome a probable DNA-RuvA(4)-RuvB(12)-RuvC(2) complex forms which resolves the HJ. Mg(2+) is required as a cofactor.

It localises to the cytoplasm. The enzyme catalyses Endonucleolytic cleavage at a junction such as a reciprocal single-stranded crossover between two homologous DNA duplexes (Holliday junction).. Functionally, the RuvA-RuvB-RuvC complex processes Holliday junction (HJ) DNA during genetic recombination and DNA repair. Endonuclease that resolves HJ intermediates. Cleaves cruciform DNA by making single-stranded nicks across the HJ at symmetrical positions within the homologous arms, yielding a 5'-phosphate and a 3'-hydroxyl group; requires a central core of homology in the junction. The consensus cleavage sequence is 5'-(A/T)TT(C/G)-3'. Cleavage occurs on the 3'-side of the TT dinucleotide at the point of strand exchange. HJ branch migration catalyzed by RuvA-RuvB allows RuvC to scan DNA until it finds its consensus sequence, where it cleaves and resolves the cruciform DNA. In Bartonella tribocorum (strain CIP 105476 / IBS 506), this protein is Crossover junction endodeoxyribonuclease RuvC.